Consider the following 411-residue polypeptide: ATP-dependent Clp protease ATP-binding subunit ClpX (411 aa).

Residues 1-51 (MAKKKDEEYCSFCGMPRTQVNLMLEGVHAHICDECALRAGEVVREALQKFK) form the ClpX-type ZB domain. Residues C10, C13, C32, and C35 each coordinate Zn(2+). 119–126 (PTGTGKTL) lines the ATP pocket.

The protein belongs to the ClpX chaperone family. As to quaternary structure, component of the ClpX-ClpP complex. Forms a hexameric ring that, in the presence of ATP, binds to fourteen ClpP subunits assembled into a disk-like structure with a central cavity, resembling the structure of eukaryotic proteasomes.

ATP-dependent specificity component of the Clp protease. It directs the protease to specific substrates. Can perform chaperone functions in the absence of ClpP. The sequence is that of ATP-dependent Clp protease ATP-binding subunit ClpX from Porphyromonas gingivalis (strain ATCC 33277 / DSM 20709 / CIP 103683 / JCM 12257 / NCTC 11834 / 2561).